The primary structure comprises 248 residues: Cobalt transport protein CbiM (248 aa).

A signal peptide spans 1-29 (MKRVSVKNYLVCLLIAVCAIFVFPANASA). The next 6 helical transmembrane spans lie at 40-60 (GWCISWGVMCMPFLVIGFFSI), 72-92 (TLLAMCGAFAFVLSALKMPSV), 104-124 (LGAVLFGPTAMSVIGAIILLF), 136-156 (TLGANVFSMAIVGPLVSFGVF), 167-187 (GLAVFLAVFFGDLMTYVITSV), and 210-230 (IFGFTQVPLAVCEGLLTVVIY).

It belongs to the CbiM family. In terms of assembly, forms an energy-coupling factor (ECF) transporter complex composed of an ATP-binding protein (A component, CbiO), a transmembrane protein (T component, CbiQ) and 2 possible substrate-capture proteins (S components, CbiM and CbiN) of unknown stoichimetry.

Its subcellular location is the cell membrane. The protein operates within cofactor biosynthesis; adenosylcobalamin biosynthesis. Its function is as follows. Part of the energy-coupling factor (ECF) transporter complex CbiMNOQ involved in cobalt import. The chain is Cobalt transport protein CbiM from Ruminiclostridium cellulolyticum (strain ATCC 35319 / DSM 5812 / JCM 6584 / H10) (Clostridium cellulolyticum).